Consider the following 188-residue polypeptide: Elongation factor P-like protein (188 aa).

The protein belongs to the elongation factor P family.

The sequence is that of Elongation factor P-like protein from Saccharophagus degradans (strain 2-40 / ATCC 43961 / DSM 17024).